A 463-amino-acid chain; its full sequence is uncharacterized protein (463 aa).

This is an uncharacterized protein from Saccharomyces cerevisiae (strain ATCC 204508 / S288c) (Baker's yeast).